The following is a 138-amino-acid chain: Nucleoside diphosphate kinase (138 aa).

Residues lysine 10, phenylalanine 58, arginine 86, threonine 92, arginine 103, and asparagine 113 each coordinate ATP. Histidine 116 serves as the catalytic Pros-phosphohistidine intermediate.

This sequence belongs to the NDK family. Homotetramer. Mg(2+) serves as cofactor.

Its subcellular location is the cytoplasm. It carries out the reaction a 2'-deoxyribonucleoside 5'-diphosphate + ATP = a 2'-deoxyribonucleoside 5'-triphosphate + ADP. The enzyme catalyses a ribonucleoside 5'-diphosphate + ATP = a ribonucleoside 5'-triphosphate + ADP. Its function is as follows. Major role in the synthesis of nucleoside triphosphates other than ATP. The ATP gamma phosphate is transferred to the NDP beta phosphate via a ping-pong mechanism, using a phosphorylated active-site intermediate. The polypeptide is Nucleoside diphosphate kinase (Glaesserella parasuis serovar 5 (strain SH0165) (Haemophilus parasuis)).